A 184-amino-acid chain; its full sequence is UPF0398 protein BALH_1408 (184 aa).

Belongs to the UPF0398 family.

The sequence is that of UPF0398 protein BALH_1408 from Bacillus thuringiensis (strain Al Hakam).